Consider the following 122-residue polypeptide: Small ribosomal subunit protein uS13 (122 aa).

The segment at 95–122 (NLPVRGQRTHTNARTRKGKAKPIAGKKK) is disordered.

This sequence belongs to the universal ribosomal protein uS13 family. As to quaternary structure, part of the 30S ribosomal subunit. Forms a loose heterodimer with protein S19. Forms two bridges to the 50S subunit in the 70S ribosome.

Located at the top of the head of the 30S subunit, it contacts several helices of the 16S rRNA. In the 70S ribosome it contacts the 23S rRNA (bridge B1a) and protein L5 of the 50S subunit (bridge B1b), connecting the 2 subunits; these bridges are implicated in subunit movement. Contacts the tRNAs in the A and P-sites. The polypeptide is Small ribosomal subunit protein uS13 (Methylobacterium nodulans (strain LMG 21967 / CNCM I-2342 / ORS 2060)).